The primary structure comprises 400 residues: Acetate kinase (400 aa).

Asn-10 is a binding site for Mg(2+). Lys-17 is an ATP binding site. Arg-89 lines the substrate pocket. The active-site Proton donor/acceptor is Asp-148. ATP is bound by residues 208-212 (HLGNG), 283-285 (DCR), and 331-335 (GIGEN). Glu-385 contacts Mg(2+).

It belongs to the acetokinase family. Homodimer. It depends on Mg(2+) as a cofactor. Mn(2+) serves as cofactor.

It localises to the cytoplasm. It carries out the reaction acetate + ATP = acetyl phosphate + ADP. Its pathway is metabolic intermediate biosynthesis; acetyl-CoA biosynthesis; acetyl-CoA from acetate: step 1/2. Functionally, catalyzes the formation of acetyl phosphate from acetate and ATP. Can also catalyze the reverse reaction. The protein is Acetate kinase of Haemophilus ducreyi (strain 35000HP / ATCC 700724).